We begin with the raw amino-acid sequence, 77 residues long: Cell division topological specificity factor (77 aa).

The protein belongs to the MinE family.

Its function is as follows. Prevents the cell division inhibition by proteins MinC and MinD at internal division sites while permitting inhibition at polar sites. This ensures cell division at the proper site by restricting the formation of a division septum at the midpoint of the long axis of the cell. The protein is Cell division topological specificity factor of Helicobacter pylori (strain HPAG1).